A 690-amino-acid polypeptide reads, in one-letter code: Elongation factor G (690 aa).

The region spanning 8–283 (SKCRNIGIMA…AVVDFLPAPN (276 aa)) is the tr-type G domain. Residues 17 to 24 (AHIDAGKT), 81 to 85 (DTPGH), and 135 to 138 (NKMD) each bind GTP.

Belongs to the TRAFAC class translation factor GTPase superfamily. Classic translation factor GTPase family. EF-G/EF-2 subfamily.

It localises to the cytoplasm. In terms of biological role, catalyzes the GTP-dependent ribosomal translocation step during translation elongation. During this step, the ribosome changes from the pre-translocational (PRE) to the post-translocational (POST) state as the newly formed A-site-bound peptidyl-tRNA and P-site-bound deacylated tRNA move to the P and E sites, respectively. Catalyzes the coordinated movement of the two tRNA molecules, the mRNA and conformational changes in the ribosome. The chain is Elongation factor G from Ehrlichia chaffeensis (strain ATCC CRL-10679 / Arkansas).